A 168-amino-acid chain; its full sequence is Nascent polypeptide-associated complex subunit alpha (168 aa).

Residues 14–78 (SKNEKKAREL…PKVDDFTRRL (65 aa)) enclose the NAC-A/B domain. The segment at 83 to 129 (QQAASAAKDPQSIQADMAAAAAAPAAPAAPAAAPEEDEAGQVDESGL) is disordered. Residues 100-115 (AAAAAAPAAPAAPAAA) are compositionally biased toward low complexity. Residues 129–168 (LDGQDIELVMQQANVSRNKAVKALREHNSDIVNAIMSLSK) form the UBA domain.

It belongs to the NAC-alpha family. As to quaternary structure, part of the nascent polypeptide-associated complex (NAC), consisting of EGD2 and EGD1. NAC associates with ribosomes via EGD1.

It localises to the cytoplasm. The protein localises to the nucleus. Functionally, component of the nascent polypeptide-associated complex (NAC), a dynamic component of the ribosomal exit tunnel, protecting the emerging polypeptides from interaction with other cytoplasmic proteins to ensure appropriate nascent protein targeting. The NAC complex also promotes mitochondrial protein import by enhancing productive ribosome interactions with the outer mitochondrial membrane and blocks the inappropriate interaction of ribosomes translating non-secretory nascent polypeptides with translocation sites in the membrane of the endoplasmic reticulum. EGD2 may also be involved in transcription regulation. This chain is Nascent polypeptide-associated complex subunit alpha (EGD2), found in Eremothecium gossypii (strain ATCC 10895 / CBS 109.51 / FGSC 9923 / NRRL Y-1056) (Yeast).